The sequence spans 495 residues: Glutamyl-tRNA(Gln) amidotransferase subunit A (495 aa).

Residues Lys78 and Ser158 each act as charge relay system in the active site. Catalysis depends on Ser182, which acts as the Acyl-ester intermediate.

Belongs to the amidase family. GatA subfamily. In terms of assembly, heterotrimer of A, B and C subunits.

The catalysed reaction is L-glutamyl-tRNA(Gln) + L-glutamine + ATP + H2O = L-glutaminyl-tRNA(Gln) + L-glutamate + ADP + phosphate + H(+). Functionally, allows the formation of correctly charged Gln-tRNA(Gln) through the transamidation of misacylated Glu-tRNA(Gln) in organisms which lack glutaminyl-tRNA synthetase. The reaction takes place in the presence of glutamine and ATP through an activated gamma-phospho-Glu-tRNA(Gln). This chain is Glutamyl-tRNA(Gln) amidotransferase subunit A, found in Ruegeria sp. (strain TM1040) (Silicibacter sp.).